The sequence spans 151 residues: SsrA-binding protein (151 aa).

This sequence belongs to the SmpB family.

The protein localises to the cytoplasm. Required for rescue of stalled ribosomes mediated by trans-translation. Binds to transfer-messenger RNA (tmRNA), required for stable association of tmRNA with ribosomes. tmRNA and SmpB together mimic tRNA shape, replacing the anticodon stem-loop with SmpB. tmRNA is encoded by the ssrA gene; the 2 termini fold to resemble tRNA(Ala) and it encodes a 'tag peptide', a short internal open reading frame. During trans-translation Ala-aminoacylated tmRNA acts like a tRNA, entering the A-site of stalled ribosomes, displacing the stalled mRNA. The ribosome then switches to translate the ORF on the tmRNA; the nascent peptide is terminated with the 'tag peptide' encoded by the tmRNA and targeted for degradation. The ribosome is freed to recommence translation, which seems to be the essential function of trans-translation. The protein is SsrA-binding protein of Chlamydia muridarum (strain MoPn / Nigg).